Reading from the N-terminus, the 214-residue chain is NKG2-D type II integral membrane protein (214 aa).

The Cytoplasmic segment spans residues 1–56; the sequence is MGWIRDRRSPSSMEIRELHNRDVINRGAFKSRQKRTQTLITSKCGENPSPFFLARS. A helical; Signal-anchor for type II membrane protein membrane pass occupies residues 57–77; the sequence is IAIAMGIRFIVMVMIYSGMII. Residues 78–214 are Extracellular-facing; the sequence is NLLFNQEAPS…NTYICMKRTV (137 aa). Disulfide bonds link Cys-94–Cys-103 and Cys-97–Cys-108. Residues 98–210 enclose the C-type lectin domain; that stretch reads PKNWICYRNS…CLTLNTYICM (113 aa). Asn-113, Asn-129, Asn-161, and Asn-184 each carry an N-linked (GlcNAc...) asparagine glycan. 2 disulfides stabilise this stretch: Cys-125/Cys-209 and Cys-187/Cys-201.

In terms of assembly, homodimer; disulfide-linked. Heterohexamer composed of two subunits of KLRK1 and four subunits of HCST/DAP10. Interacts (via transmembrane domain) with HCST/DAP10 (via transmembrane domain); the interaction is required for KLRK1 NK cell surface and induces NK cell-mediated cytotoxicity. Can form disulfide-bonded heterodimer with CD94. Interacts with CEACAM1; recruits PTPN6 that dephosphorylates VAV1. As to expression, detected in peripheral blood leukocytes, macrophages, monocytes and natural killer cells.

It localises to the cell membrane. Its function is as follows. Functions as an activating and costimulatory receptor involved in immunosurveillance upon binding to various cellular stress-inducible ligands displayed at the surface of autologous tumor cells and virus-infected cells. Provides both stimulatory and costimulatory innate immune responses on activated killer (NK) cells, leading to cytotoxic activity. Acts as a costimulatory receptor for T-cell receptor (TCR) in CD8(+) T-cell-mediated adaptive immune responses by amplifying T-cell activation. Stimulates perforin-mediated elimination of ligand-expressing tumor cells. Signaling involves calcium influx, culminating in the expression of TNF-alpha. Participates in NK cell-mediated bone marrow graft rejection. May play a regulatory role in differentiation and survival of NK cells. Binds to ligands belonging to various subfamilies of MHC class I-related glycoproteins. The polypeptide is NKG2-D type II integral membrane protein (KLRK1) (Sus scrofa (Pig)).